We begin with the raw amino-acid sequence, 176 residues long: Ribosome maturation factor RimM (176 aa).

Residues 94-176 (KDEFFYFEIL…RFGFEILQNS (83 aa)) form the PRC barrel domain.

This sequence belongs to the RimM family. In terms of assembly, binds ribosomal protein uS19.

It localises to the cytoplasm. Functionally, an accessory protein needed during the final step in the assembly of 30S ribosomal subunit, possibly for assembly of the head region. Essential for efficient processing of 16S rRNA. May be needed both before and after RbfA during the maturation of 16S rRNA. It has affinity for free ribosomal 30S subunits but not for 70S ribosomes. This is Ribosome maturation factor RimM from Campylobacter hominis (strain ATCC BAA-381 / DSM 21671 / CCUG 45161 / LMG 19568 / NCTC 13146 / CH001A).